Consider the following 397-residue polypeptide: uncharacterized protein (397 aa).

[4Fe-4S] cluster-binding residues include cysteine 8, cysteine 14, cysteine 17, and cysteine 95. Glutamine 229, tyrosine 258, glutamate 279, and aspartate 325 together coordinate S-adenosyl-L-methionine. The Nucleophile role is filled by cysteine 352.

It belongs to the class I-like SAM-binding methyltransferase superfamily. RNA M5U methyltransferase family.

This is an uncharacterized protein from Chlamydia muridarum (strain MoPn / Nigg).